Consider the following 447-residue polypeptide: Phosphoglucosamine mutase (447 aa).

Ser101 functions as the Phosphoserine intermediate in the catalytic mechanism. 4 residues coordinate Mg(2+): Ser101, Asp242, Asp244, and Asp246. Phosphoserine is present on Ser101.

The protein belongs to the phosphohexose mutase family. It depends on Mg(2+) as a cofactor. Activated by phosphorylation.

It catalyses the reaction alpha-D-glucosamine 1-phosphate = D-glucosamine 6-phosphate. Functionally, catalyzes the conversion of glucosamine-6-phosphate to glucosamine-1-phosphate. This is Phosphoglucosamine mutase from Methylobacterium radiotolerans (strain ATCC 27329 / DSM 1819 / JCM 2831 / NBRC 15690 / NCIMB 10815 / 0-1).